The primary structure comprises 180 residues: Major urinary protein 1 (180 aa).

The N-terminal stretch at 1-18 is a signal peptide; sequence MKMLLLLCLGLTLVCVHA. Cys82 and Cys175 are disulfide-bonded.

It belongs to the calycin superfamily. Lipocalin family. Abundant in the urine of adult male mice but absent from that of females.

It is found in the secreted. Functionally, binds pheromones that are released from drying urine of males. These pheromones affect the sexual behavior of females. The polypeptide is Major urinary protein 1 (Mup1) (Mus musculus (Mouse)).